Consider the following 502-residue polypeptide: Activin receptor type-1-like (502 aa).

Residues 1–22 (MTLGSFRRGLLMLSVAFGLTRG) form the signal peptide. Residues 23-119 (DLAKPSKLVN…EEPEVDAHLP (97 aa)) are Extracellular-facing. Residue asparagine 32 is glycosylated (N-linked (GlcNAc...) asparagine). 3 disulfide bridges follow: cysteine 33–cysteine 50, cysteine 35–cysteine 40, and cysteine 45–cysteine 68. The segment at 72–75 (NQEL) is mediates specificity for BMP ligand. Disulfide bonds link cysteine 76-cysteine 88 and cysteine 89-cysteine 94. N-linked (GlcNAc...) asparagine glycosylation is present at asparagine 97. The helical transmembrane segment at 120–140 (LILGPVLALPVLVALGALGLW) threads the bilayer. The Cytoplasmic segment spans residues 141–502 (RVRRRQEKQR…HNPEKPKVIH (362 aa)). Phosphoserine occurs at positions 154, 159, and 160. The 30-residue stretch at 171–200 (SMLGDFLDSDCTTGSGSGLPFLVQRTVARQ) folds into the GS domain. One can recognise a Protein kinase domain in the interval 201-502 (VALVECVGKG…HNPEKPKVIH (302 aa)). ATP-binding positions include 207-215 (VGKGRYGEV) and lysine 228. Aspartate 329 (proton acceptor) is an active-site residue.

Belongs to the protein kinase superfamily. TKL Ser/Thr protein kinase family. TGFB receptor subfamily. As to quaternary structure, interacts with TSC22D1/TSC-22. Requires Mg(2+) as cofactor. The cofactor is Mn(2+).

It localises to the cell membrane. It catalyses the reaction L-threonyl-[receptor-protein] + ATP = O-phospho-L-threonyl-[receptor-protein] + ADP + H(+). The enzyme catalyses L-seryl-[receptor-protein] + ATP = O-phospho-L-seryl-[receptor-protein] + ADP + H(+). Type I receptor for TGF-beta family ligands BMP9/GDF2 and BMP10 and important regulator of normal blood vessel development. On ligand binding, forms a receptor complex consisting of two type II and two type I transmembrane serine/threonine kinases. Type II receptors phosphorylate and activate type I receptors which autophosphorylate, then bind and activate SMAD transcriptional regulators. May bind activin as well. The polypeptide is Activin receptor type-1-like (Acvrl1) (Mus musculus (Mouse)).